The following is a 173-amino-acid chain: MAIILGVDPGSRITGYGVIKCVGRQQVYVGSGCIRTSSDELPLRLKQIFDGLSEIIRQYQPDEFAIERVFMAKNADSALKLGQARGAAIVAATAANLPVAEYSATQIKSAVVGTGRAQKTQVQHMIQQLLKLPSAPQADAADALGVAVCHYHTSQSLVALAGRANVRTYGRYK.

Catalysis depends on residues Asp8, Glu67, and Asp139. Asp8, Glu67, and Asp139 together coordinate Mg(2+).

Belongs to the RuvC family. As to quaternary structure, homodimer which binds Holliday junction (HJ) DNA. The HJ becomes 2-fold symmetrical on binding to RuvC with unstacked arms; it has a different conformation from HJ DNA in complex with RuvA. In the full resolvosome a probable DNA-RuvA(4)-RuvB(12)-RuvC(2) complex forms which resolves the HJ. Mg(2+) serves as cofactor.

Its subcellular location is the cytoplasm. The enzyme catalyses Endonucleolytic cleavage at a junction such as a reciprocal single-stranded crossover between two homologous DNA duplexes (Holliday junction).. In terms of biological role, the RuvA-RuvB-RuvC complex processes Holliday junction (HJ) DNA during genetic recombination and DNA repair. Endonuclease that resolves HJ intermediates. Cleaves cruciform DNA by making single-stranded nicks across the HJ at symmetrical positions within the homologous arms, yielding a 5'-phosphate and a 3'-hydroxyl group; requires a central core of homology in the junction. The consensus cleavage sequence is 5'-(A/T)TT(C/G)-3'. Cleavage occurs on the 3'-side of the TT dinucleotide at the point of strand exchange. HJ branch migration catalyzed by RuvA-RuvB allows RuvC to scan DNA until it finds its consensus sequence, where it cleaves and resolves the cruciform DNA. This chain is Crossover junction endodeoxyribonuclease RuvC, found in Shewanella pealeana (strain ATCC 700345 / ANG-SQ1).